A 480-amino-acid chain; its full sequence is MAESEKEAALPPKEAFSDWYNELLWMAEIMDVRYPVKGLYVWYPFGFAIRRNTYSIIREILDNSGHQETLFPLLIPENEFMKEAEHIKGFENEVYWVTHGGKDPLDIPLALRPTSETAIYPMYKKWVRSHADFPLKLYQIVNTFRYETKHTRPLIRLREITSFKEAHTVHATWEDAEAQVKEAIGLYTEIYRRLAVPVLRSRRPDWDKFPGADYTDALDAVMPDGKTLQIGTVHHLGDNFAKTFDIKYEAPDGEQRYAHQTCYGISERSIAATISIHGDDKGLVLPPEIAPVQVVIIPIIFKKGAEEVFAACKDVQERLKKAGIRVEVDASDLRPGAKYYKWEMKGVPLRLEIGPRDLQNNVAVAVRRDTGEKDQITLLEIEAGVRLKFEAIQKSLYEKAGSELESRIFDCVDLDEVKEKIQEGVATIPWCGKRECGLAMEDHIGAGILGIPLTPRSKGKEKCPACGEETETRVYVARTY.

It belongs to the class-II aminoacyl-tRNA synthetase family. ProS type 3 subfamily. Homodimer.

Its subcellular location is the cytoplasm. The enzyme catalyses tRNA(Pro) + L-proline + ATP = L-prolyl-tRNA(Pro) + AMP + diphosphate. Functionally, catalyzes the attachment of proline to tRNA(Pro) in a two-step reaction: proline is first activated by ATP to form Pro-AMP and then transferred to the acceptor end of tRNA(Pro). The sequence is that of Proline--tRNA ligase from Methanosarcina mazei (strain ATCC BAA-159 / DSM 3647 / Goe1 / Go1 / JCM 11833 / OCM 88) (Methanosarcina frisia).